Reading from the N-terminus, the 43-residue chain is SPbeta prophage-derived uncharacterized protein YotD (43 aa).

The sequence is that of SPbeta prophage-derived uncharacterized protein YotD (yotD) from Bacillus subtilis (strain 168).